Here is a 166-residue protein sequence, read N- to C-terminus: uncharacterized protein (166 aa).

Position 2 is an N-acetylalanine (A2).

Homodimer.

This is an uncharacterized protein from Arabidopsis thaliana (Mouse-ear cress).